The following is a 355-amino-acid chain: N-acetyl-gamma-glutamyl-phosphate reductase (355 aa).

Cys152 is a catalytic residue.

This sequence belongs to the NAGSA dehydrogenase family. Type 1 subfamily.

It localises to the cytoplasm. The catalysed reaction is N-acetyl-L-glutamate 5-semialdehyde + phosphate + NADP(+) = N-acetyl-L-glutamyl 5-phosphate + NADPH + H(+). It functions in the pathway amino-acid biosynthesis; L-arginine biosynthesis; N(2)-acetyl-L-ornithine from L-glutamate: step 3/4. Its function is as follows. Catalyzes the NADPH-dependent reduction of N-acetyl-5-glutamyl phosphate to yield N-acetyl-L-glutamate 5-semialdehyde. The polypeptide is N-acetyl-gamma-glutamyl-phosphate reductase (Psychrobacter cryohalolentis (strain ATCC BAA-1226 / DSM 17306 / VKM B-2378 / K5)).